We begin with the raw amino-acid sequence, 145 residues long: Large ribosomal subunit protein uL11 (145 aa).

This sequence belongs to the universal ribosomal protein uL11 family. Part of the ribosomal stalk of the 50S ribosomal subunit. Interacts with L10 and the large rRNA to form the base of the stalk. L10 forms an elongated spine to which L12 dimers bind in a sequential fashion forming a multimeric L10(L12)X complex. One or more lysine residues are methylated.

Forms part of the ribosomal stalk which helps the ribosome interact with GTP-bound translation factors. The polypeptide is Large ribosomal subunit protein uL11 (Rubrobacter xylanophilus (strain DSM 9941 / JCM 11954 / NBRC 16129 / PRD-1)).